Consider the following 163-residue polypeptide: Phosphopantetheine adenylyltransferase (163 aa).

T11 lines the substrate pocket. ATP-binding positions include 11 to 12 and H19; that span reads TF. Substrate is bound by residues K43, L75, and R89. ATP-binding positions include 90 to 92, E100, and 125 to 131; these read GLR and YSFISST.

Belongs to the bacterial CoaD family. In terms of assembly, homohexamer. Requires Mg(2+) as cofactor.

It localises to the cytoplasm. It carries out the reaction (R)-4'-phosphopantetheine + ATP + H(+) = 3'-dephospho-CoA + diphosphate. It functions in the pathway cofactor biosynthesis; coenzyme A biosynthesis; CoA from (R)-pantothenate: step 4/5. In terms of biological role, reversibly transfers an adenylyl group from ATP to 4'-phosphopantetheine, yielding dephospho-CoA (dPCoA) and pyrophosphate. The protein is Phosphopantetheine adenylyltransferase of Acinetobacter baumannii (strain ACICU).